The following is a 437-amino-acid chain: Phosphomethylpyrimidine synthase (437 aa).

Substrate is bound by residues Asn-69, Met-98, Tyr-127, His-163, 185–187, 226–229, and Glu-265; these read SRG and DACR. His-269 is a Zn(2+) binding site. Tyr-292 provides a ligand contact to substrate. His-333 is a Zn(2+) binding site. The [4Fe-4S] cluster site is built by Cys-409, Cys-412, and Cys-416.

This sequence belongs to the ThiC family. [4Fe-4S] cluster is required as a cofactor.

The enzyme catalyses 5-amino-1-(5-phospho-beta-D-ribosyl)imidazole + S-adenosyl-L-methionine = 4-amino-2-methyl-5-(phosphooxymethyl)pyrimidine + CO + 5'-deoxyadenosine + formate + L-methionine + 3 H(+). The protein operates within cofactor biosynthesis; thiamine diphosphate biosynthesis. Catalyzes the synthesis of the hydroxymethylpyrimidine phosphate (HMP-P) moiety of thiamine from aminoimidazole ribotide (AIR) in a radical S-adenosyl-L-methionine (SAM)-dependent reaction. This chain is Phosphomethylpyrimidine synthase, found in Alkaliphilus metalliredigens (strain QYMF).